Consider the following 342-residue polypeptide: Isopentenyl-diphosphate delta-isomerase (342 aa).

A substrate-binding site is contributed by Arg-11–Lys-12. FMN is bound by residues Ser-68, Ser-69–Thr-71, Ser-99, and Asn-127. Residue Ser-99 to Arg-101 coordinates substrate. Gln-162 contributes to the substrate binding site. Mg(2+) is bound at residue Glu-163. FMN contacts are provided by residues Lys-194, Thr-224, Gly-274–Lys-276, and Ala-295–Gly-296.

It belongs to the IPP isomerase type 2 family. As to quaternary structure, homooctamer. Dimer of tetramers. FMN is required as a cofactor. Requires NADPH as cofactor. Mg(2+) serves as cofactor.

It is found in the cytoplasm. The catalysed reaction is isopentenyl diphosphate = dimethylallyl diphosphate. Functionally, involved in the biosynthesis of isoprenoids. Catalyzes the 1,3-allylic rearrangement of the homoallylic substrate isopentenyl (IPP) to its allylic isomer, dimethylallyl diphosphate (DMAPP). The chain is Isopentenyl-diphosphate delta-isomerase from Rickettsia africae (strain ESF-5).